Consider the following 436-residue polypeptide: UPF0229 protein Meso_0256 (436 aa).

The interval 53–110 is disordered; it reads PMPARGTSEPTFRPDRSSGERGYILPGNKEFAPGDRLPKPGASGGEGGTGAGRGGSDD. Positions 94–106 are enriched in gly residues; the sequence is ASGGEGGTGAGRG.

Belongs to the UPF0229 family.

In Chelativorans sp. (strain BNC1), this protein is UPF0229 protein Meso_0256.